The primary structure comprises 135 residues: Putative pre-16S rRNA nuclease (135 aa).

Belongs to the YqgF nuclease family.

The protein resides in the cytoplasm. Could be a nuclease involved in processing of the 5'-end of pre-16S rRNA. The chain is Putative pre-16S rRNA nuclease from Maridesulfovibrio salexigens (strain ATCC 14822 / DSM 2638 / NCIMB 8403 / VKM B-1763) (Desulfovibrio salexigens).